Consider the following 360-residue polypeptide: MVLHFSNLARHKTFVLHWYRYTLRNVARQTFSWHLKARVKDITRTTIVKHKSDKSSWSIYILLRDLKALNGFLRNKKTAAAWRLLTLYSKKPLRSGASSPSVALEHSPPLQDPETVRNSHIIHSYIVERQQKNLLPLEIPAEYKTLLLLPLALHDHALKRLHLIESKLVRGPPKVSVNYTSAGKARIWFLRTAVNKNQRQSKALGQIIRREKRKNQKNIDYWEKCRVNGIWAWHEAAWEHLMETNTMLTESPAKYFDNERSRKRAASDGTSVKAVAEWLDPVFSSLDMLQAQSAEQAAYFEQYKHNTVLQGLQQFFARKSDKMYQNRKKRFESLLENDLPFVTPYFSQQNLATVMKSHKF.

Residues 93 to 112 (LRSGASSPSVALEHSPPLQD) are disordered.

This sequence belongs to the RRG1 family.

It localises to the mitochondrion. In terms of biological role, essential for respiratory growth and required for mitochondrial protein synthesis. Required for vacuolar acidification. The protein is Required for respiratory growth protein 1, mitochondrial (RRG1) of Lachancea thermotolerans (strain ATCC 56472 / CBS 6340 / NRRL Y-8284) (Yeast).